The following is a 107-amino-acid chain: UPF0060 membrane protein A1S_1909 (107 aa).

4 helical membrane passes run 2-22 (FGLF…PYLI), 28-48 (SAWL…LLTL), 56-76 (IYAA…RFVD), and 85-105 (ILGG…PQGL).

This sequence belongs to the UPF0060 family.

It localises to the cell inner membrane. This is UPF0060 membrane protein A1S_1909 from Acinetobacter baumannii (strain ATCC 17978 / DSM 105126 / CIP 53.77 / LMG 1025 / NCDC KC755 / 5377).